A 286-amino-acid chain; its full sequence is MFDSIKIALQYITPKHLISRLVGKLAAAKAGGLTTGLIKLFIKQYKVNMAEAERENPADYASFNEFFTRALKDDARVICPNEQDLAMPVDGAVSQLGDIKHDSIFQAKGHDYSLTTLLGGKPELATAFKNGKFATVYLSPKDYHRIHMPMDGQLTDMVYVPGELFSVSPLTAERVPGLFARNERVVAIFDTPKGKMAMVLVGATIVASIETVWAGTVSPPVGKNVVHWQYPSEGEDAVFLKKGDELGRFKLGSTIVACFEPDMVEFADYSAGDDTRLGDVFATLTQ.

Catalysis depends on charge relay system; for autoendoproteolytic cleavage activity residues Asp90, His147, and Ser253. Ser253 (schiff-base intermediate with substrate; via pyruvic acid; for decarboxylase activity) is an active-site residue. Position 253 is a pyruvic acid (Ser); by autocatalysis (Ser253).

Belongs to the phosphatidylserine decarboxylase family. PSD-B subfamily. Prokaryotic type I sub-subfamily. In terms of assembly, heterodimer of a large membrane-associated beta subunit and a small pyruvoyl-containing alpha subunit. It depends on pyruvate as a cofactor. Post-translationally, is synthesized initially as an inactive proenzyme. Formation of the active enzyme involves a self-maturation process in which the active site pyruvoyl group is generated from an internal serine residue via an autocatalytic post-translational modification. Two non-identical subunits are generated from the proenzyme in this reaction, and the pyruvate is formed at the N-terminus of the alpha chain, which is derived from the carboxyl end of the proenzyme. The autoendoproteolytic cleavage occurs by a canonical serine protease mechanism, in which the side chain hydroxyl group of the serine supplies its oxygen atom to form the C-terminus of the beta chain, while the remainder of the serine residue undergoes an oxidative deamination to produce ammonia and the pyruvoyl prosthetic group on the alpha chain. During this reaction, the Ser that is part of the protease active site of the proenzyme becomes the pyruvoyl prosthetic group, which constitutes an essential element of the active site of the mature decarboxylase.

Its subcellular location is the cell membrane. The enzyme catalyses a 1,2-diacyl-sn-glycero-3-phospho-L-serine + H(+) = a 1,2-diacyl-sn-glycero-3-phosphoethanolamine + CO2. The protein operates within phospholipid metabolism; phosphatidylethanolamine biosynthesis; phosphatidylethanolamine from CDP-diacylglycerol: step 2/2. In terms of biological role, catalyzes the formation of phosphatidylethanolamine (PtdEtn) from phosphatidylserine (PtdSer). This is Phosphatidylserine decarboxylase proenzyme from Pseudoalteromonas atlantica (strain T6c / ATCC BAA-1087).